A 201-amino-acid polypeptide reads, in one-letter code: Recombination protein RecR (201 aa).

Residues Cys57 to Cys72 form a C4-type zinc finger. In terms of domain architecture, Toprim spans Gly81–Pro176.

The protein belongs to the RecR family.

May play a role in DNA repair. It seems to be involved in an RecBC-independent recombinational process of DNA repair. It may act with RecF and RecO. This Shigella boydii serotype 4 (strain Sb227) protein is Recombination protein RecR.